We begin with the raw amino-acid sequence, 63 residues long: uncharacterized protein (63 aa).

Positions 1 to 21 (MNRALILTFVLFFALFAISSA) are cleaved as a signal peptide.

This is an uncharacterized protein from Dictyostelium discoideum (Social amoeba).